The chain runs to 616 residues: Zinc metalloproteinase-disintegrin-like VLAIP-A (616 aa).

The N-terminal stretch at methionine 1 to serine 20 is a signal peptide. Residues isoleucine 21–glutamate 194 constitute a propeptide that is removed on maturation. Glutamine 195 carries the pyrrolidone carboxylic acid modification. One can recognise a Peptidase M12B domain in the interval lysine 203–proline 399. Disulfide bonds link cysteine 314-cysteine 394, cysteine 354-cysteine 378, and cysteine 356-cysteine 361. Residue histidine 339 coordinates Zn(2+). Glutamate 340 is an active-site residue. Zn(2+) contacts are provided by histidine 343 and histidine 349. N-linked (GlcNAc...) asparagine glycosylation is present at asparagine 377. The Disintegrin domain maps to proline 407 to asparagine 493. The Ca(2+) site is built by valine 409, asparagine 412, leucine 414, glutamate 416, glutamate 419, and aspartate 422. Intrachain disulfides connect cysteine 410-cysteine 439, cysteine 421-cysteine 434, cysteine 423-cysteine 429, cysteine 433-cysteine 456, cysteine 447-cysteine 453, cysteine 452-cysteine 478, cysteine 465-cysteine 485, cysteine 472-cysteine 504, cysteine 497-cysteine 509, cysteine 516-cysteine 566, cysteine 531-cysteine 577, cysteine 544-cysteine 554, cysteine 561-cysteine 603, and cysteine 597-cysteine 609. Residues glutamate 471–aspartate 473 carry the D/ECD-tripeptide motif.

The protein belongs to the venom metalloproteinase (M12B) family. P-III subfamily. P-IIIc sub-subfamily. As to quaternary structure, heterodimer; disulfide-linked. Zn(2+) serves as cofactor. Post-translationally, the N-terminus is blocked. In terms of tissue distribution, expressed by the venom gland.

The protein localises to the secreted. Its activity is regulated as follows. Inhibited by EDTA or 1,10-phenanthroline. Not inhibited by PMSF. In terms of biological role, snake venom zinc metalloprotease that hydrolyzes the alpha-chain (FGA) and more slowly the beta-chain (FGB) of fibrinogen, without affecting the gamma-chain. Cleaves alpha-chain of fibrinogen at '432-Lys-|-Leu-433' and '535-Pro-|-Met-536' bonds. Induces apoptosis in vascular endothelial cells and inhibits endothelial cell adhesion to extracellular matrix proteins such as fibrinogen, fibronectin, vitronectin, collagen I, and collagen IV. Also hydrolyzes azocasein, and insulin B-chain (at the '38-Ala-|-Leu-39' bond). The protein is Zinc metalloproteinase-disintegrin-like VLAIP-A of Macrovipera lebetinus (Levantine viper).